A 268-amino-acid polypeptide reads, in one-letter code: Homeobox protein CDX-1 (268 aa).

The interval 1–152 is disordered; that stretch reads MYVGYVLDKD…AGGGGSGKTR (152 aa). Composition is skewed to pro residues over residues 29–42 and 54–67; these read TYAP…PPQY and APAP…PFPA. The segment covering 73-91 has biased composition (low complexity); that stretch reads AAAYGPGPTASAASPAPLA. Over residues 92 to 108 the composition is skewed to pro residues; the sequence is FGPPPDFSPVPAPPGPG. The segment covering 115–128 has biased composition (low complexity); it reads SLGAPGAPSSPGAP. A DNA-binding region (homeobox) is located at residues 154–213; that stretch reads KDKYRVVYTDHQRLELEKEFHYSRYITIRRKSELAANLGLTERQVKIWFQNRRAKERKVN. The interval 157–178 is interaction with DNA; the sequence is YRVVYTDHQRLELEKEFHYSRY. The tract at residues 196 to 207 is interaction with 5-mCpG DNA; the sequence is RQVKIWFQNRRA. The disordered stretch occupies residues 209–268; sequence ERKVNKKKQQQQQPLPPTQLPLPLDGTPTPSGPPLGSLCPTNAGLLGTPSPVPVKEEFLP. Over residues 229-246 the composition is skewed to low complexity; sequence PLPLDGTPTPSGPPLGSL.

The protein belongs to the Caudal homeobox family. In terms of tissue distribution, intestinal epithelium.

It is found in the nucleus. Its function is as follows. Plays a role in transcriptional regulation. Involved in activated KRAS-mediated transcriptional activation of PRKD1 in colorectal cancer (CRC) cells. Binds to the PRKD1 promoter in colorectal cancer (CRC) cells. Could play a role in the terminal differentiation of the intestine. Binds preferentially to methylated DNA. The polypeptide is Homeobox protein CDX-1 (Cdx1) (Mus musculus (Mouse)).